A 233-amino-acid chain; its full sequence is Biosynthetic peptidoglycan transglycosylase (233 aa).

Residues 4 to 24 (LAYLAGCLIVGVVAMQVYFFL) form a helical membrane-spanning segment.

Belongs to the glycosyltransferase 51 family.

It localises to the cell inner membrane. It catalyses the reaction [GlcNAc-(1-&gt;4)-Mur2Ac(oyl-L-Ala-gamma-D-Glu-L-Lys-D-Ala-D-Ala)](n)-di-trans,octa-cis-undecaprenyl diphosphate + beta-D-GlcNAc-(1-&gt;4)-Mur2Ac(oyl-L-Ala-gamma-D-Glu-L-Lys-D-Ala-D-Ala)-di-trans,octa-cis-undecaprenyl diphosphate = [GlcNAc-(1-&gt;4)-Mur2Ac(oyl-L-Ala-gamma-D-Glu-L-Lys-D-Ala-D-Ala)](n+1)-di-trans,octa-cis-undecaprenyl diphosphate + di-trans,octa-cis-undecaprenyl diphosphate + H(+). It functions in the pathway cell wall biogenesis; peptidoglycan biosynthesis. In terms of biological role, peptidoglycan polymerase that catalyzes glycan chain elongation from lipid-linked precursors. The chain is Biosynthetic peptidoglycan transglycosylase from Cupriavidus metallidurans (strain ATCC 43123 / DSM 2839 / NBRC 102507 / CH34) (Ralstonia metallidurans).